The chain runs to 546 residues: Methionine--tRNA ligase (546 aa).

The 'HIGH' region motif lies at 15-25; that stretch reads PYANGPIHLGH. Zn(2+) is bound by residues Cys146, Cys149, Cys159, and Cys162. Residues 332 to 336 carry the 'KMSKS' region motif; sequence KMSKS. Residue Lys335 participates in ATP binding.

The protein belongs to the class-I aminoacyl-tRNA synthetase family. MetG type 1 subfamily. As to quaternary structure, monomer. Requires Zn(2+) as cofactor.

The protein resides in the cytoplasm. The catalysed reaction is tRNA(Met) + L-methionine + ATP = L-methionyl-tRNA(Met) + AMP + diphosphate. Functionally, is required not only for elongation of protein synthesis but also for the initiation of all mRNA translation through initiator tRNA(fMet) aminoacylation. The chain is Methionine--tRNA ligase from Coxiella burnetii (strain Dugway 5J108-111).